The primary structure comprises 620 residues: Glutathione-regulated potassium-efflux system protein KefC (620 aa).

Residues 1-3 lie on the Periplasmic side of the membrane; that stretch reads MDS. Residues 4–24 form a helical membrane-spanning segment; sequence HTLIQALIYLGSAALIVPIAV. Residue arginine 25 is a topological domain, cytoplasmic. The helical transmembrane segment at 26 to 46 threads the bilayer; the sequence is LGLGSVLGYLIAGCIIGPWGL. Residues 47 to 53 lie on the Periplasmic side of the membrane; the sequence is RLVTDAE. A helical membrane pass occupies residues 54-74; the sequence is SILHFAEIGVVLMLFIIGLEL. Residues 75-89 lie on the Cytoplasmic side of the membrane; it reads DPQRLWKLRAAVFGG. A helical transmembrane segment spans residues 90 to 110; the sequence is GALQMVICGGLLGLFCMLLGL. At 111 to 113 the chain is on the periplasmic side; it reads RWQ. A helical membrane pass occupies residues 114–134; sequence VAELIGMTLALSSTAIAMQAM. The Cytoplasmic segment spans residues 135–148; the sequence is NERNLMVTQMGRSA. The chain crosses the membrane as a helical span at residues 149–169; the sequence is FAVLLFQDIAAIPLVAMIPLL. The Periplasmic portion of the chain corresponds to 170-177; the sequence is AASSASTT. A helical membrane pass occupies residues 178-198; that stretch reads MGAFVLSALKVAGALALVVLL. Over 199–213 the chain is Cytoplasmic; the sequence is GRYVTRPALRFVARS. The helical transmembrane segment at 214 to 233 threads the bilayer; it reads GLREVFSAVALFLVFGFGLL. Over 234-236 the chain is Periplasmic; that stretch reads LEE. The helical transmembrane segment at 237–254 threads the bilayer; sequence VGLSMAMGAFLAGVLLAS. Topologically, residues 255–269 are cytoplasmic; that stretch reads SEYRHALESDIEPFK. The helical transmembrane segment at 270–290 threads the bilayer; that stretch reads GLLLGLFFIGVGMSIDFGTLL. Residues 291–293 lie on the Periplasmic side of the membrane; the sequence is ENP. Residues 294-314 form a helical membrane-spanning segment; it reads LRIVILLLGFLIIKIAMLWLI. Residues 315–326 are Cytoplasmic-facing; that stretch reads ARPLQVPNKQRR. The helical transmembrane segment at 327–347 threads the bilayer; that stretch reads WFAVLLGQGSEFAFVVFGAAQ. At 348 to 358 the chain is on the periplasmic side; sequence MANVLEPEWAK. A helical membrane pass occupies residues 359 to 379; that stretch reads SLTLAVALSMAATPILLVILN. Residues 380–620 are Cytoplasmic-facing; that stretch reads RLEQSSTEEA…ADEPETKPSS (241 aa). Residues 399-518 form the RCK N-terminal domain; it reads QPRVIIAGFG…AGVEKPERET (120 aa). Residues 597–620 are disordered; it reads GWQGTEEGKHTGNMADEPETKPSS.

The protein belongs to the monovalent cation:proton antiporter 2 (CPA2) transporter (TC 2.A.37) family. KefC subfamily. As to quaternary structure, homodimer. Interacts with the regulatory subunit KefF.

The protein resides in the cell inner membrane. Its function is as follows. Pore-forming subunit of a potassium efflux system that confers protection against electrophiles. Catalyzes K(+)/H(+) antiport. This chain is Glutathione-regulated potassium-efflux system protein KefC, found in Escherichia coli O6:H1 (strain CFT073 / ATCC 700928 / UPEC).